A 299-amino-acid polypeptide reads, in one-letter code: Glutamyl-Q tRNA(Asp) synthetase (299 aa).

Residues 9 to 13 (RFAPS) and Glu-45 contribute to the L-glutamate site. Positions 12-22 (PSPTGPLHFGS) match the 'HIGH' region motif. Zn(2+) contacts are provided by Cys-101, Cys-103, and Cys-118. L-glutamate-binding residues include Tyr-170 and Arg-188. A 'KMSKS' region motif is present at residues 226 to 230 (KLSKS). Lys-229 serves as a coordination point for ATP.

The protein belongs to the class-I aminoacyl-tRNA synthetase family. GluQ subfamily. Requires Zn(2+) as cofactor.

Catalyzes the tRNA-independent activation of glutamate in presence of ATP and the subsequent transfer of glutamate onto a tRNA(Asp). Glutamate is transferred on the 2-amino-5-(4,5-dihydroxy-2-cyclopenten-1-yl) moiety of the queuosine in the wobble position of the QUC anticodon. The polypeptide is Glutamyl-Q tRNA(Asp) synthetase (Xanthomonas axonopodis pv. citri (strain 306)).